Here is a 156-residue protein sequence, read N- to C-terminus: Deoxyuridine 5'-triphosphate nucleotidohydrolase (156 aa).

Residues 76 to 78 (RSG), Asn89, 93 to 95 (TVD), and Lys103 contribute to the substrate site.

Belongs to the dUTPase family. Mg(2+) serves as cofactor.

The enzyme catalyses dUTP + H2O = dUMP + diphosphate + H(+). It functions in the pathway pyrimidine metabolism; dUMP biosynthesis; dUMP from dCTP (dUTP route): step 2/2. Functionally, this enzyme is involved in nucleotide metabolism: it produces dUMP, the immediate precursor of thymidine nucleotides and it decreases the intracellular concentration of dUTP so that uracil cannot be incorporated into DNA. The sequence is that of Deoxyuridine 5'-triphosphate nucleotidohydrolase from Rhizobium etli (strain CIAT 652).